A 734-amino-acid polypeptide reads, in one-letter code: MALRFPRFSQGLAQDPTTRRIWFGIATAHDFESHDDITEERLYQNIFASHFGQLAIIFLWTSGNLFHVAWQGNFEAWVQDPLHVRPIAHAIWDPHFGQPAVEAFTRGGALGPVNIAYSGVYQWWYTIGLRTNGDLYTGALFLLFLSTISLIAGWLHLQPKWKPSVSWFKNAESRLNHHLSGLFGVSSLAWTGHLVHVAIPGSRGEYVRWNNLLSILPHPEGLGPFFTGQWNLYAQNPDSNSHIFGTPQGAGTAILTLLGGFHPQTQSLWLTDIAHHHLAIAFLFLVAGHMYRTNFGIGHSIKDLLEAHTPPGGRLGRGHKGLYDTINNSIHFQLGLALASLGVITSLVAQHMYSLPAYAFIAQDFTTQAALYTHHQYIAGFIMTGAFAHGAIFFIRDYNPEQNEDNVLARMLDHKEAIISHLSWASLFLGFHTLGLYVHNDVMLAFGTPEKQILIEPIFAQWIQSAHGKTSYGFDILLSSTNSPAFNAGRSIWLPGWLNAVNENSNSLFLTIGPGDFLVHHAIALGLHTTTLILVKGALDARGSKLMPDKKDFGYSFPCDGPGRGGTCDISAWDAFYLAVFWMLNTIGWVTFYWHWKHITLWQGNVSQFNESSTYLMGWLRDYLWLNSSQLINGYNPFGMNSLSVWAWMFLFGHLVWATGFMFLISWRGYWQELIETLAWAHERTPLANLIRWRDKPVALSIVQARLVGLAHFSVGYIFTYAAFLIASTSGKFG.

Helical transmembrane passes span 46-69, 135-158, 175-199, 273-291, 330-353, 369-395, 417-439, and 517-535; these read IFAS…FHVA, LYTG…LHLQ, LNHH…HVAI, IAHH…GHMY, IHFQ…QHMY, AALY…IFFI, AIIS…LYVH, and FLVH…LILV. Cysteine 559 and cysteine 568 together coordinate [4Fe-4S] cluster. Transmembrane regions (helical) follow at residues 575–596 and 643–665; these read AFYL…YWHW and LSVW…MFLI. Histidine 654, methionine 662, and tyrosine 670 together coordinate chlorophyll a. A phylloquinone-binding site is contributed by tryptophan 671. A helical transmembrane segment spans residues 707–727; it reads LVGLAHFSVGYIFTYAAFLIA.

This sequence belongs to the PsaA/PsaB family. In terms of assembly, the PsaA/B heterodimer binds the P700 chlorophyll special pair and subsequent electron acceptors. PSI consists of a core antenna complex that captures photons, and an electron transfer chain that converts photonic excitation into a charge separation. The eukaryotic PSI reaction center is composed of at least 11 subunits. P700 is a chlorophyll a/chlorophyll a' dimer, A0 is one or more chlorophyll a, A1 is one or both phylloquinones and FX is a shared 4Fe-4S iron-sulfur center. serves as cofactor.

Its subcellular location is the plastid. It localises to the chloroplast thylakoid membrane. The enzyme catalyses reduced [plastocyanin] + hnu + oxidized [2Fe-2S]-[ferredoxin] = oxidized [plastocyanin] + reduced [2Fe-2S]-[ferredoxin]. PsaA and PsaB bind P700, the primary electron donor of photosystem I (PSI), as well as the electron acceptors A0, A1 and FX. PSI is a plastocyanin-ferredoxin oxidoreductase, converting photonic excitation into a charge separation, which transfers an electron from the donor P700 chlorophyll pair to the spectroscopically characterized acceptors A0, A1, FX, FA and FB in turn. Oxidized P700 is reduced on the lumenal side of the thylakoid membrane by plastocyanin. The protein is Photosystem I P700 chlorophyll a apoprotein A2 of Glycine max (Soybean).